We begin with the raw amino-acid sequence, 317 residues long: MIFVILEHILTHISFSIIAIVITTHLMTLLVHEIVGLCDSSEKGMIATFFCITGLLVTRWIYSGHFPLNDLYESLMFLSWSFSLILMVPYFKNHKNHFSTITAPSAICTQSFATSGLSTEIHQSEILVPALQSHWLMMHVSMMLLSYAALLCGSLLSIALLVITFRKNIDMIGFTNHLLIWPFSFGEIKYLNEKRSLLKNTSFLLFRNYHRYQLTQRLDHWSYRVIGLGFTFSTIGILSGAVWANEAWGSYWNWDPKETWAFITWTISAIYSHTRTNKSLQGMNSAIVASMGFLIIWICYFGVNLLGIGLHSYGSFT.

Helical transmembrane passes span Ile13–Val35, Gly44–Gly64, Leu71–Phe91, Met143–Ile163, Met171–Leu191, Val225–Asn245, and Ala286–Leu306.

It belongs to the CcmF/CycK/Ccl1/NrfE/CcsA family. As to quaternary structure, may interact with Ccs1.

The protein resides in the plastid. The protein localises to the chloroplast thylakoid membrane. Functionally, required during biogenesis of c-type cytochromes (cytochrome c6 and cytochrome f) at the step of heme attachment. This chain is Cytochrome c biogenesis protein CcsA, found in Illicium oligandrum (Star anise).